A 622-amino-acid polypeptide reads, in one-letter code: Low affinity potassium transport system protein Kup (622 aa).

Helical transmembrane passes span 9 to 29, 49 to 69, 101 to 121, 137 to 157, 163 to 183, 213 to 233, 247 to 267, 276 to 296, 337 to 357, 363 to 383, 395 to 415, and 419 to 439; these read LPAL…TSPL, VFGF…IKYI, VLVI…VITP, PQLD…LFVI, GMVG…LAVL, VSFI…ALYA, WFSV…ALLL, PFFL…ATLA, IYIP…IVSF, LAAA…ILSA, LFVG…FSAN, and IVSG…VMTT.

Belongs to the HAK/KUP transporter (TC 2.A.72) family.

It localises to the cell inner membrane. It carries out the reaction K(+)(in) + H(+)(in) = K(+)(out) + H(+)(out). Its function is as follows. Responsible for the low-affinity transport of potassium into the cell. Likely operates as a K(+):H(+) symporter. The sequence is that of Low affinity potassium transport system protein Kup from Klebsiella pneumoniae subsp. pneumoniae (strain ATCC 700721 / MGH 78578).